A 495-amino-acid chain; its full sequence is Maturase K (495 aa).

It belongs to the intron maturase 2 family. MatK subfamily.

Its subcellular location is the plastid. It is found in the chloroplast. Functionally, usually encoded in the trnK tRNA gene intron. Probably assists in splicing its own and other chloroplast group II introns. This chain is Maturase K, found in Torreya californica (California nutmeg).